The following is a 421-amino-acid chain: Zinc metalloproteinase-disintegrin-like lachestatin-2 (421 aa).

The 197-residue stretch at 10–206 (KYVKLVLVAD…DMPQCILEKP (197 aa)) folds into the Peptidase M12B domain. Cystine bridges form between Cys-121–Cys-201, Cys-161–Cys-185, and Cys-163–Cys-168. His-146 is a Zn(2+) binding site. The active site involves Glu-147. Residues His-150 and His-156 each coordinate Zn(2+). A Disintegrin domain is found at 214 to 299 (PPVCGNYFVE…AECTDRFQRN (86 aa)). Residues Val-216, Asn-219, Phe-221, Glu-223, Glu-226, and Asp-229 each contribute to the Ca(2+) site. Disulfide bonds link Cys-217–Cys-246, Cys-228–Cys-241, Cys-230–Cys-236, Cys-240–Cys-263, Cys-254–Cys-260, Cys-259–Cys-285, Cys-272–Cys-292, Cys-279–Cys-310, Cys-303–Cys-315, Cys-322–Cys-372, Cys-337–Cys-383, Cys-350–Cys-360, Cys-367–Cys-409, and Cys-403–Cys-414. A D/ECD-tripeptide motif is present at residues 278–280 (ECD). Asp-280, Met-281, Asp-283, Asp-294, and Arg-295 together coordinate Ca(2+). Residue Asn-312 is glycosylated (N-linked (GlcNAc...) asparagine).

It belongs to the venom metalloproteinase (M12B) family. P-III subfamily. P-IIIc sub-subfamily. Homodimer; disulfide-linked. Zn(2+) serves as cofactor. As to expression, expressed by the venom gland.

Its subcellular location is the secreted. In terms of biological role, snake venom zinc metalloprotease that induces apoptosis in vascular endothelial cells (VEC), without degrading the extracellular matrix (it cannot cleave collagen) or inhibiting adhesion of VEC. Has also fibrinogenolytic and hemorrhagic activities. This is Zinc metalloproteinase-disintegrin-like lachestatin-2 from Lachesis muta rhombeata (Bushmaster).